We begin with the raw amino-acid sequence, 493 residues long: Acetylcholine receptor subunit beta-type unc-29 (493 aa).

Positions 1 to 26 are cleaved as a signal peptide; sequence MRTNRLSWILVLSVVIFLVIINTINA. 2 N-linked (GlcNAc...) asparagine glycosylation sites follow: asparagine 25 and asparagine 50. Residues 27–232 are Extracellular-facing; that stretch reads SDDEERLMVD…QVRIRRKTLF (206 aa). Cysteine 155 and cysteine 169 form a disulfide bridge. 3 helical membrane-spanning segments follow: residues 233 to 254, 262 to 280, and 296 to 317; these read YTVVLIIPTVLMAFLSMAVFFL, ITLTISVLLSIVVFLLLVS, and YLLLTFVLNVITILVTVIIINV. The Cytoplasmic segment spans residues 318-445; sequence YFRGPRTHRM…WKYVAMIIDR (128 aa). A helical membrane pass occupies residues 446 to 466; it reads LLLYVFFGITVGGTCGILFSA.

The protein belongs to the ligand-gated ion channel (TC 1.A.9) family. Acetylcholine receptor (TC 1.A.9.1) subfamily. In terms of assembly, interacts with lev-1. Component of nicotinic acetylcholine receptor composed of 2 non-alpha subunits lev-1 and unc-29, and 3 alpha subunits unc-38, unc-63 and lev-8. Interacts with oig-4. Interacts with crld-1.

It localises to the postsynaptic cell membrane. The protein localises to the cell membrane. Non-alpha subunit of nicotinic acetylcholine receptor (nAChR). Involved in nAChR sensitivity to nicotine and levasimole. In Caenorhabditis elegans, this protein is Acetylcholine receptor subunit beta-type unc-29.